Consider the following 159-residue polypeptide: Protein A40 (159 aa).

Over 1–9 (MNKHKTDYA) the chain is Cytoplasmic. A helical; Signal-anchor for type II membrane protein membrane pass occupies residues 10-30 (GYACCVICGLIVGIIFTATLL). Residues 31-159 (KVVERKLVHT…TPKLHSCYTI (129 aa)) lie on the Extracellular side of the membrane. The C-type lectin domain occupies 63 to 159 (YNNKCIHLST…TPKLHSCYTI (97 aa)).

Belongs to the poxviridae A40 protein family.

The protein localises to the host membrane. This Bos taurus (Bovine) protein is Protein A40.